The chain runs to 323 residues: Acetyl-coenzyme A carboxylase carboxyl transferase subunit alpha (323 aa).

A CoA carboxyltransferase C-terminal domain is found at 36–293 (ELELLSAKAQ…KEEVVKNLQI (258 aa)).

It belongs to the AccA family. Acetyl-CoA carboxylase is a heterohexamer composed of biotin carboxyl carrier protein (AccB), biotin carboxylase (AccC) and two subunits each of ACCase subunit alpha (AccA) and ACCase subunit beta (AccD).

It is found in the cytoplasm. It catalyses the reaction N(6)-carboxybiotinyl-L-lysyl-[protein] + acetyl-CoA = N(6)-biotinyl-L-lysyl-[protein] + malonyl-CoA. It functions in the pathway lipid metabolism; malonyl-CoA biosynthesis; malonyl-CoA from acetyl-CoA: step 1/1. Component of the acetyl coenzyme A carboxylase (ACC) complex. First, biotin carboxylase catalyzes the carboxylation of biotin on its carrier protein (BCCP) and then the CO(2) group is transferred by the carboxyltransferase to acetyl-CoA to form malonyl-CoA. This Carboxydothermus hydrogenoformans (strain ATCC BAA-161 / DSM 6008 / Z-2901) protein is Acetyl-coenzyme A carboxylase carboxyl transferase subunit alpha.